Consider the following 147-residue polypeptide: Ribonuclease H (147 aa).

The RNase H type-1 domain occupies 5–141 (ARKQITLYSD…CDELARNEAE (137 aa)). D14, E52, D74, and D133 together coordinate Mg(2+).

Belongs to the RNase H family. In terms of assembly, monomer. Mg(2+) is required as a cofactor.

It is found in the cytoplasm. It catalyses the reaction Endonucleolytic cleavage to 5'-phosphomonoester.. Endonuclease that specifically degrades the RNA of RNA-DNA hybrids. The polypeptide is Ribonuclease H (Sulfurovum sp. (strain NBC37-1)).